Reading from the N-terminus, the 258-residue chain is Ubiquinone/menaquinone biosynthesis C-methyltransferase UbiE (258 aa).

The disordered stretch occupies residues 1 to 20 (MSESRTSADGGMETSYGFRE). Residues T81, D102, and 130–131 (NA) contribute to the S-adenosyl-L-methionine site.

It belongs to the class I-like SAM-binding methyltransferase superfamily. MenG/UbiE family.

The enzyme catalyses a 2-demethylmenaquinol + S-adenosyl-L-methionine = a menaquinol + S-adenosyl-L-homocysteine + H(+). The catalysed reaction is a 2-methoxy-6-(all-trans-polyprenyl)benzene-1,4-diol + S-adenosyl-L-methionine = a 5-methoxy-2-methyl-3-(all-trans-polyprenyl)benzene-1,4-diol + S-adenosyl-L-homocysteine + H(+). It functions in the pathway quinol/quinone metabolism; menaquinone biosynthesis; menaquinol from 1,4-dihydroxy-2-naphthoate: step 2/2. It participates in cofactor biosynthesis; ubiquinone biosynthesis. Methyltransferase required for the conversion of demethylmenaquinol (DMKH2) to menaquinol (MKH2) and the conversion of 2-polyprenyl-6-methoxy-1,4-benzoquinol (DDMQH2) to 2-polyprenyl-3-methyl-6-methoxy-1,4-benzoquinol (DMQH2). This chain is Ubiquinone/menaquinone biosynthesis C-methyltransferase UbiE, found in Rhizobium etli (strain CIAT 652).